Consider the following 155-residue polypeptide: MPMARVNYAYKPEDETKAAKAMGYEMPISFKHAVEICRAIRGKKIEEARKLLEDVVEMKRAIPFKRHKKKVAHRRGLEKWYAGRYPQKAAKYVLKVLRNLEANAEYKGLDVENLVIVHAQAQKGRVIERYMPRAFGRATPRFQQLTTVELVAEVR.

This sequence belongs to the universal ribosomal protein uL22 family. In terms of assembly, part of the 50S ribosomal subunit.

Its function is as follows. This protein binds specifically to 23S rRNA. It makes multiple contacts with different domains of the 23S rRNA in the assembled 50S subunit and ribosome. In terms of biological role, the globular domain of the protein is located near the polypeptide exit tunnel on the outside of the subunit, while an extended beta-hairpin is found that lines the wall of the exit tunnel in the center of the 70S ribosome. This is Large ribosomal subunit protein uL22 from Archaeoglobus fulgidus (strain ATCC 49558 / DSM 4304 / JCM 9628 / NBRC 100126 / VC-16).